We begin with the raw amino-acid sequence, 114 residues long: uncharacterized protein (114 aa).

Residues 31 to 72 (EFEKLVSEQMKTMDKLLDLQSELDRCKQIEAELRHLERDARL) are a coiled coil.

This is an uncharacterized protein from Bacillus subtilis (strain 168).